The primary structure comprises 68 residues: DNA-directed RNA polymerase subunit omega (68 aa).

The protein belongs to the RNA polymerase subunit omega family. The RNAP catalytic core consists of 2 alpha, 1 beta, 1 beta' and 1 omega subunit. When a sigma factor is associated with the core the holoenzyme is formed, which can initiate transcription.

It carries out the reaction RNA(n) + a ribonucleoside 5'-triphosphate = RNA(n+1) + diphosphate. Promotes RNA polymerase assembly. Latches the N- and C-terminal regions of the beta' subunit thereby facilitating its interaction with the beta and alpha subunits. The sequence is that of DNA-directed RNA polymerase subunit omega from Neisseria meningitidis serogroup C (strain 053442).